Here is a 475-residue protein sequence, read N- to C-terminus: Ribulose bisphosphate carboxylase large chain (475 aa).

Residues 1–2 (MS) constitute a propeptide that is removed on maturation. Proline 3 is subject to N-acetylproline. N6,N6,N6-trimethyllysine is present on lysine 14. 2 residues coordinate substrate: asparagine 123 and threonine 173. The Proton acceptor role is filled by lysine 175. Position 177 (lysine 177) interacts with substrate. 3 residues coordinate Mg(2+): lysine 201, aspartate 203, and glutamate 204. An N6-carboxylysine modification is found at lysine 201. Histidine 294 serves as the catalytic Proton acceptor. Substrate is bound by residues arginine 295, histidine 327, and serine 379.

It belongs to the RuBisCO large chain family. Type I subfamily. Heterohexadecamer of 8 large chains and 8 small chains; disulfide-linked. The disulfide link is formed within the large subunit homodimers. Mg(2+) serves as cofactor. Post-translationally, the disulfide bond which can form in the large chain dimeric partners within the hexadecamer appears to be associated with oxidative stress and protein turnover.

It localises to the plastid. The protein resides in the chloroplast. It catalyses the reaction 2 (2R)-3-phosphoglycerate + 2 H(+) = D-ribulose 1,5-bisphosphate + CO2 + H2O. It carries out the reaction D-ribulose 1,5-bisphosphate + O2 = 2-phosphoglycolate + (2R)-3-phosphoglycerate + 2 H(+). In terms of biological role, ruBisCO catalyzes two reactions: the carboxylation of D-ribulose 1,5-bisphosphate, the primary event in carbon dioxide fixation, as well as the oxidative fragmentation of the pentose substrate in the photorespiration process. Both reactions occur simultaneously and in competition at the same active site. This is Ribulose bisphosphate carboxylase large chain from Vitis vinifera (Grape).